A 436-amino-acid chain; its full sequence is 3-ketoacyl-CoA thiolase (436 aa).

Cys-99 (acyl-thioester intermediate) is an active-site residue. Residues His-392 and Cys-422 each act as proton acceptor in the active site.

The protein belongs to the thiolase-like superfamily. Thiolase family. In terms of assembly, heterotetramer of two alpha chains (FadJ) and two beta chains (FadI).

Its subcellular location is the cytoplasm. The enzyme catalyses an acyl-CoA + acetyl-CoA = a 3-oxoacyl-CoA + CoA. It functions in the pathway lipid metabolism; fatty acid beta-oxidation. In terms of biological role, catalyzes the final step of fatty acid oxidation in which acetyl-CoA is released and the CoA ester of a fatty acid two carbons shorter is formed. This chain is 3-ketoacyl-CoA thiolase, found in Escherichia coli O1:K1 / APEC.